Reading from the N-terminus, the 322-residue chain is Solute carrier family 35 member B1 (322 aa).

The next 8 helical transmembrane spans lie at 12–32 (LRLP…GILQ), 51–71 (FALT…KILI), 85–105 (WLYA…NSAL), 136–156 (YPMA…LFMY), 168–188 (TIGY…LTGV), 210–230 (LWST…WEFL), 243–263 (ILLF…TVVY), and 285–305 (VILF…LVFL). A Di-lysine motif motif is present at residues 318–322 (KKTSH).

This sequence belongs to the nucleotide-sugar transporter family. SLC35B subfamily.

It localises to the endoplasmic reticulum membrane. It carries out the reaction ADP(in) + ATP(out) = ADP(out) + ATP(in). The enzyme catalyses UDP(out) + ATP(in) = UDP(in) + ATP(out). It catalyses the reaction UTP(out) + ATP(in) = UTP(in) + ATP(out). The catalysed reaction is dATP(out) + ATP(in) = dATP(in) + ATP(out). In terms of biological role, ATP:ADP antiporter that catalyzes the exchange of ATP and ADP across the endoplasmic reticulum (ER) membrane. Imports ATP from the cytosol to the ER lumen and exports ADP in the opposite direction. Regulates ER energy metabolism and protein biogenesis. Appears to be part of a calcium-dependent ER to cytosol low energy response axis, where calcium efflux from ER to the cytosol triggers ATP import into the ER lumen to maintain sufficient ATP supply. Provides ATP to ER chaperone HSPA5 that drives protein folding and trafficking in the ER. Can transport dATP, UTP or UDP in exchange for ATP, but the physiological relevance of this process remains to be established. The protein is Solute carrier family 35 member B1 (SLC35B1) of Bos taurus (Bovine).